A 113-amino-acid chain; its full sequence is Protein PucD (113 aa).

Functionally, seems to be required for the LH-II stabilization. The chain is Protein PucD (pucD) from Rhodobacter capsulatus (Rhodopseudomonas capsulata).